Consider the following 169-residue polypeptide: Peptide methionine sulfoxide reductase MsrA (169 aa).

C10 is an active-site residue.

This sequence belongs to the MsrA Met sulfoxide reductase family.

It carries out the reaction L-methionyl-[protein] + [thioredoxin]-disulfide + H2O = L-methionyl-(S)-S-oxide-[protein] + [thioredoxin]-dithiol. The enzyme catalyses [thioredoxin]-disulfide + L-methionine + H2O = L-methionine (S)-S-oxide + [thioredoxin]-dithiol. Functionally, has an important function as a repair enzyme for proteins that have been inactivated by oxidation. Catalyzes the reversible oxidation-reduction of methionine sulfoxide in proteins to methionine. The sequence is that of Peptide methionine sulfoxide reductase MsrA from Streptococcus pyogenes serotype M28 (strain MGAS6180).